A 210-amino-acid polypeptide reads, in one-letter code: Fimbriae Z protein (210 aa).

One can recognise a Response regulatory domain in the interval 5 to 121 (SVIIMDEHPI…DIYNAVKMIL (117 aa)). Residue Asp-56 is modified to 4-aspartylphosphate. Residues 143–208 (GGHHDMPLSN…ELIDYAKSHE (66 aa)) form the HTH luxR-type domain. The segment at residues 167–186 (NKEIAEQLLLSNKTISAHKA) is a DNA-binding region (H-T-H motif).

The protein localises to the cytoplasm. In Salmonella typhimurium (strain LT2 / SGSC1412 / ATCC 700720), this protein is Fimbriae Z protein (fimZ).